Reading from the N-terminus, the 195-residue chain is Thymidine kinase (195 aa).

Residues 15–22 and 88–91 each bind ATP; these read GSMFSGKS and DEVQ. The active-site Proton acceptor is the Glu89. Zn(2+) contacts are provided by Cys145, Cys148, Cys183, and Xaa186.

Belongs to the thymidine kinase family. In terms of assembly, homotetramer.

The protein resides in the cytoplasm. The enzyme catalyses thymidine + ATP = dTMP + ADP + H(+). In Bacillus cereus (strain ATCC 10987 / NRS 248), this protein is Thymidine kinase.